The following is a 136-amino-acid chain: Large ribosomal subunit protein uL16 (136 aa).

It belongs to the universal ribosomal protein uL16 family. Part of the 50S ribosomal subunit.

Its function is as follows. Binds 23S rRNA and is also seen to make contacts with the A and possibly P site tRNAs. The protein is Large ribosomal subunit protein uL16 of Rickettsia massiliae (strain Mtu5).